We begin with the raw amino-acid sequence, 361 residues long: MNKLALYCRSGFEKELAAEITEKATALGVFGFARVVENSGYVIFECYQIGEADLLARKITFSQLIFARQLIVVSDLISNLSVQDRISPIIEYYRQQEKILNLKQSSDIWVETADTNEAKTLAAFCRKFTVPLRQALRKQGWLQAKNKKSGITLHIFFTQSNSCYIGYSYNNNHAEHIMGIPRLKFPAEAPSRSTLKLEEAILYFIPPNQEATRFNENKYAVDLGACPGGWTYQLVRRGVFVYAVDHGKMATSLHETGRIEHCAEDGFKFRPPKHCKIDWLVCDMVEQPRRIADLISQWLVKGWCKETIFNLKLPMKKRYFEVQQCLRQIEDKLNKQNISFQLQAKHLYHDREEITVYIRLM.

Residues Ser193, 226–229, Asp245, Asp265, and Asp283 each bind S-adenosyl-L-methionine; that span reads CPGG. Residue Lys312 is the Proton acceptor of the active site.

The protein belongs to the class I-like SAM-binding methyltransferase superfamily. RNA methyltransferase RlmE family. RlmM subfamily. Monomer.

The protein resides in the cytoplasm. It catalyses the reaction cytidine(2498) in 23S rRNA + S-adenosyl-L-methionine = 2'-O-methylcytidine(2498) in 23S rRNA + S-adenosyl-L-homocysteine + H(+). In terms of biological role, catalyzes the 2'-O-methylation at nucleotide C2498 in 23S rRNA. In Histophilus somni (strain 129Pt) (Haemophilus somnus), this protein is Ribosomal RNA large subunit methyltransferase M.